Consider the following 136-residue polypeptide: ATP synthase epsilon chain (136 aa).

The tract at residues 88–136 (DASSAESDLQAARNEVSKMEGQPASADKVKAQQSLDRARARVQAAKNQD) is disordered.

It belongs to the ATPase epsilon chain family. As to quaternary structure, F-type ATPases have 2 components, CF(1) - the catalytic core - and CF(0) - the membrane proton channel. CF(1) has five subunits: alpha(3), beta(3), gamma(1), delta(1), epsilon(1). CF(0) has three main subunits: a, b and c.

It is found in the cellular thylakoid membrane. In terms of biological role, produces ATP from ADP in the presence of a proton gradient across the membrane. The polypeptide is ATP synthase epsilon chain (Synechococcus sp. (strain WH7803)).